The primary structure comprises 299 residues: Phosphatidylserine decarboxylase proenzyme (299 aa).

Residues D115, H171, and S258 each act as charge relay system; for autoendoproteolytic cleavage activity in the active site. S258 functions as the Schiff-base intermediate with substrate; via pyruvic acid; for decarboxylase activity in the catalytic mechanism. S258 carries the post-translational modification Pyruvic acid (Ser); by autocatalysis.

The protein belongs to the phosphatidylserine decarboxylase family. PSD-B subfamily. Prokaryotic type II sub-subfamily. As to quaternary structure, heterodimer of a large membrane-associated beta subunit and a small pyruvoyl-containing alpha subunit. Pyruvate serves as cofactor. In terms of processing, is synthesized initially as an inactive proenzyme. Formation of the active enzyme involves a self-maturation process in which the active site pyruvoyl group is generated from an internal serine residue via an autocatalytic post-translational modification. Two non-identical subunits are generated from the proenzyme in this reaction, and the pyruvate is formed at the N-terminus of the alpha chain, which is derived from the carboxyl end of the proenzyme. The autoendoproteolytic cleavage occurs by a canonical serine protease mechanism, in which the side chain hydroxyl group of the serine supplies its oxygen atom to form the C-terminus of the beta chain, while the remainder of the serine residue undergoes an oxidative deamination to produce ammonia and the pyruvoyl prosthetic group on the alpha chain. During this reaction, the Ser that is part of the protease active site of the proenzyme becomes the pyruvoyl prosthetic group, which constitutes an essential element of the active site of the mature decarboxylase.

The protein localises to the cell membrane. The enzyme catalyses a 1,2-diacyl-sn-glycero-3-phospho-L-serine + H(+) = a 1,2-diacyl-sn-glycero-3-phosphoethanolamine + CO2. It functions in the pathway phospholipid metabolism; phosphatidylethanolamine biosynthesis; phosphatidylethanolamine from CDP-diacylglycerol: step 2/2. In terms of biological role, catalyzes the formation of phosphatidylethanolamine (PtdEtn) from phosphatidylserine (PtdSer). The polypeptide is Phosphatidylserine decarboxylase proenzyme (Chlamydia caviae (strain ATCC VR-813 / DSM 19441 / 03DC25 / GPIC) (Chlamydophila caviae)).